The primary structure comprises 308 residues: MKWIEVQVTTTQEAEEAVTNIMHELGAGGVVIKNPNDVKLLAQSDNWDYLDSSLFEEEGNIKVFAYFPIASDTTDKINILKDRIVELKSFGIDIGNFDVKVSEVDEADWENNWKQYYKPLKIGKKIVIKPSWEEYVSQGEEIIIELDPGMAFGTGTHETTKMCLEFLEDIVMPESIVFDVGCGSGILSITSSKLGAKEVYAADIDEVSVEVARQNVELNNLQNVKVFKSDLLSEFRGKADIIVANIIADVIIKLSAEVPKYLKEEGLFLASGIIKSRKEEVLQKVEEFFEVLQIREEGEWCAILSRKK.

Positions 160, 181, 203, and 245 each coordinate S-adenosyl-L-methionine.

Belongs to the methyltransferase superfamily. PrmA family.

Its subcellular location is the cytoplasm. The catalysed reaction is L-lysyl-[protein] + 3 S-adenosyl-L-methionine = N(6),N(6),N(6)-trimethyl-L-lysyl-[protein] + 3 S-adenosyl-L-homocysteine + 3 H(+). Methylates ribosomal protein L11. This Thermoanaerobacter pseudethanolicus (strain ATCC 33223 / 39E) (Clostridium thermohydrosulfuricum) protein is Ribosomal protein L11 methyltransferase.